A 310-amino-acid chain; its full sequence is GTPase Era (310 aa).

Positions R17–E184 constitute an Era-type G domain. The G1 stretch occupies residues G25–S32. G25 to S32 is a binding site for GTP. The tract at residues Q51–A55 is G2. The G3 stretch occupies residues D72–G75. GTP is bound by residues D72–I76 and N134–D137. The G4 stretch occupies residues N134 to D137. The tract at residues I163–A165 is G5. Residues L215–E292 enclose the KH type-2 domain.

Belongs to the TRAFAC class TrmE-Era-EngA-EngB-Septin-like GTPase superfamily. Era GTPase family. Monomer.

It is found in the cytoplasm. It localises to the cell inner membrane. Functionally, an essential GTPase that binds both GDP and GTP, with rapid nucleotide exchange. Plays a role in 16S rRNA processing and 30S ribosomal subunit biogenesis and possibly also in cell cycle regulation and energy metabolism. The sequence is that of GTPase Era from Sinorhizobium medicae (strain WSM419) (Ensifer medicae).